Reading from the N-terminus, the 302-residue chain is Probable WRKY transcription factor 40 (302 aa).

Positions 140-206 form a DNA-binding region, WRKY; the sequence is DTTLVVKDGY…YEGEHNHPMP (67 aa).

This sequence belongs to the WRKY group III family.

It localises to the nucleus. Functionally, transcription factor. Interacts specifically with the W box (5'-(T)TGAC[CT]-3'), a frequently occurring elicitor-responsive cis-acting element. This is Probable WRKY transcription factor 40 from Arabidopsis thaliana (Mouse-ear cress).